Consider the following 241-residue polypeptide: Orotidine 5'-phosphate decarboxylase (241 aa).

Residues aspartate 15, lysine 37, 64–73 (DLKYHDIPNT), threonine 126, arginine 187, glutamine 196, glycine 216, and arginine 217 contribute to the substrate site. The Proton donor role is filled by lysine 66.

It belongs to the OMP decarboxylase family. Type 1 subfamily. Homodimer.

The catalysed reaction is orotidine 5'-phosphate + H(+) = UMP + CO2. Its pathway is pyrimidine metabolism; UMP biosynthesis via de novo pathway; UMP from orotate: step 2/2. In terms of biological role, catalyzes the decarboxylation of orotidine 5'-monophosphate (OMP) to uridine 5'-monophosphate (UMP). The chain is Orotidine 5'-phosphate decarboxylase from Geotalea uraniireducens (strain Rf4) (Geobacter uraniireducens).